Consider the following 265-residue polypeptide: Ribosomal RNA small subunit methyltransferase A (265 aa).

S-adenosyl-L-methionine contacts are provided by His-13, Leu-15, Gly-40, Glu-61, Asp-85, and Asn-103.

The protein belongs to the class I-like SAM-binding methyltransferase superfamily. rRNA adenine N(6)-methyltransferase family. RsmA subfamily.

It localises to the cytoplasm. It carries out the reaction adenosine(1518)/adenosine(1519) in 16S rRNA + 4 S-adenosyl-L-methionine = N(6)-dimethyladenosine(1518)/N(6)-dimethyladenosine(1519) in 16S rRNA + 4 S-adenosyl-L-homocysteine + 4 H(+). Its function is as follows. Specifically dimethylates two adjacent adenosines (A1518 and A1519) in the loop of a conserved hairpin near the 3'-end of 16S rRNA in the 30S particle. May play a critical role in biogenesis of 30S subunits. The sequence is that of Ribosomal RNA small subunit methyltransferase A from Bordetella bronchiseptica (strain ATCC BAA-588 / NCTC 13252 / RB50) (Alcaligenes bronchisepticus).